Consider the following 250-residue polypeptide: Protein orai-2 (250 aa).

4 consecutive transmembrane segments (helical) span residues 66–83, 94–114, 148–168, and 192–212; these read TSAL…EVQL, LIAF…ALLI, LAWG…VVLL, and AALV…VFTI.

Belongs to the Orai family. Oligomerizes in homomeric and heteromeric ORAI complexes. Native CRAC channels most likely consist of hexameric ORAI heteromers, implying that diverse ORAI1, ORAI2 and ORAI3 subunit combinations with distinct biophysical properties can operate in a cell-type specific way. Interacts with STIM1; this regulates channel activity. Interacts with CRACR2A/EFCAB4B.

It localises to the cell membrane. The catalysed reaction is Ca(2+)(in) = Ca(2+)(out). CRAC channels are regulated by fast Ca(2+)-dependent inactivation (FCDI), a mechanism that limits Ca(2+) influx and cell toxicity. ORAI2 channels display prominent FCDI. Inhibited by lanthanides such as Gd(3+) ions. Its function is as follows. Pore-forming subunit of inward rectifying Ca(2+) release-activated Ca(2+) (CRAC) channels. Assembles with ORAI1 and ORAI3 to form hexameric CRAC channels that mediate Ca(2+) influx upon depletion of endoplasmic reticulum Ca(2+) store and channel activation by Ca(2+) sensor STIM1, a process known as store-operated Ca(2+) entry (SOCE). Various pore subunit combinations may account for distinct CRAC channel spatiotemporal and cell-type specific dynamics. ORAI1 mainly contributes to the generation of Ca(2+) plateaus involved in sustained Ca(2+) entry and is dispensable for cytosolic Ca(2+) oscillations, whereas ORAI2 and ORAI3 generate oscillatory patterns. CRAC channels assemble in Ca(2+) signaling microdomains where Ca(2+) influx is coupled to calmodulin and calcineurin signaling and activation of NFAT transcription factors recruited to ORAI1 via AKAP5. CRAC channels are the main pathway for Ca(2+) influx in T cells and promote the immune response to pathogens by activating NFAT-dependent cytokine and chemokine transcription. This Mus musculus (Mouse) protein is Protein orai-2 (Orai2).